Consider the following 210-residue polypeptide: MGVRAQQKEKTRRSLVEAAFSQLSAERSFASLSLREVAREAGIAPTSFYRHFRDVDELGLTMVDESGLMLRQLMRQARQRIAKGGSVIRTSVSTFMEFIGNNPNAFRLLLRERSGTSAAFRAAVAREIQHFIAELADYLELENHMPRAFTEAQAEAMVTIVFSAGAEALDVGAEQRRQLEERLVLQLRMIAKGAYYWYRREQEKIAHHSE.

Residues 10–70 form the HTH tetR-type domain; that stretch reads KTRRSLVEAA…TMVDESGLML (61 aa). The H-T-H motif DNA-binding region spans 33–52; it reads SLREVAREAGIAPTSFYRHF.

In terms of assembly, homodimer.

The protein localises to the cytoplasm. In terms of biological role, represses the transcription of fabB, involved in unsaturated fatty acid (UFA) biosynthesis. By controlling UFA production, FabR directly influences the physical properties of the membrane bilayer. The polypeptide is HTH-type transcriptional repressor FabR (Salmonella arizonae (strain ATCC BAA-731 / CDC346-86 / RSK2980)).